Here is a 128-residue protein sequence, read N- to C-terminus: MELMKLEIVTPNGVIFDDDVKQVTLPGSEGEFGVLPKHATLVSLLDTGVIVIEKADGSEVAVAINSGYVKVDEEKTTCIVDGAVALSGEDSDLAKALEEAKELIKKAESSSVAIASAVSKVEQIGKSF.

It belongs to the ATPase epsilon chain family. As to quaternary structure, F-type ATPases have 2 components, CF(1) - the catalytic core - and CF(0) - the membrane proton channel. CF(1) has five subunits: alpha(3), beta(3), gamma(1), delta(1), epsilon(1). CF(0) has three main subunits: a, b and c.

It localises to the cell inner membrane. In terms of biological role, produces ATP from ADP in the presence of a proton gradient across the membrane. The protein is ATP synthase epsilon chain of Sulfurovum sp. (strain NBC37-1).